The following is a 693-amino-acid chain: ATP-dependent DNA helicase RecG (693 aa).

The tract at residues 48–146 is wedge domain; that stretch reads THLYPIGELL…GDLSTPELQE (99 aa). Residues 283–448 form the Helicase ATP-binding domain; it reads DMALDVPMMR…AYADLDTSVI (166 aa). ATP is bound at residue 296 to 303; the sequence is GDVGSGKT. The DEAH box signature appears at 397–400; that stretch reads DEQH. Residues 482-628 form the Helicase C-terminal domain; it reads EGRQAYWVCT…GFVIAQKDLE (147 aa).

The protein belongs to the helicase family. RecG subfamily. As to quaternary structure, monomer in solution. Probably a monomer on HJ DNA. Binding to fork DNA is facilitated by SSB; the proteins do not seem to stably associate. Mg(2+) serves as cofactor.

The catalysed reaction is Couples ATP hydrolysis with the unwinding of duplex DNA by translocating in the 3'-5' direction.. The enzyme catalyses ATP + H2O = ADP + phosphate + H(+). Its function is as follows. Plays a critical role in recombination and DNA repair. Helps process Holliday junction (HJ) intermediates to mature products by catalyzing branch migration. Has replication fork regression activity, unwinds stalled or blocked replication forks to make a HJ that can be resolved by RuvC or RusA. Also rewinds unwound dsDNA in an ATP-dependent manner. Has double-stranded (ds)DNA unwinding activity characteristic of a DNA helicase with 3'-5' polarity in vitro on linear dsDNA; branched duplex DNA (Y-DNA) substrates adopt different conformations that influence which of the two arms are unwound. Binds and unwinds HJ and Y-DNA but not linear duplex DNA; binds no more than 10 nucleotides of ssDNA at a fork. Has a role in constitutive stable DNA replication (cSDR, DNA replication in the absence of protein synthesis) and R-loop (RNA annealed with dsDNA) formation. Unwinds R-loops but not RNA:DNA hybrids. Is genetically synergistic to RadA and RuvABC. This is ATP-dependent DNA helicase RecG from Escherichia coli (strain K12).